A 520-amino-acid chain; its full sequence is MDEERALYIVRAGEAGAIERVLRDYSDKHRATFKFESADEDKRKKLCEGIFKVLVKGVPTTCQVPCLEVLRILSRDKKILAPVTTEENMQILLRLAKLHESDDSLEKVSEFPVIVESLKCLCNIVFNSQVAQQLSLELNLAAKLCNLLRKCKDRKFINDIKCFDLRLLFVLSLLHTDIRSQLRYELQGLPLLTQILESAFSIKWTDEYESAIDHSGPPLSPQETDCAIEALKALFNVTVDSWKVHKESDSHQFRVMAAVLRHCLLIVGPTEDKTEELHSNAVNLLSNVPVSCLDVLICPLTHEETAQEAATLDELPGDKTAEKDTALKSSAMVYNGMNMEAIHVLLSFMEKRIDKGSSYREGLTPVLSLLTECSRAHRNIRKFLKDQVLPPLRDVTNRPEVGSTVRNKLVRLMTHVDLGVKQIAAEFLFVLCKERVDSLLKYTGYGNAAGLLAARGLLAGGRGDNWYSEDEDTDTEEYKNAKPKEELLKPMGLKPDGTITPLEEALSQYSVIEETSSDTD.

Phosphoserine is present on Ser468. At Thr473 the chain carries Phosphothreonine.

Belongs to the synembryn family. In terms of assembly, interacts with GDP-bound G(s) G-alpha proteins GNAL and GNAS. Does not interact with G-alpha proteins when they are in complex with subunits beta and gamma.

Its subcellular location is the cytoplasm. It localises to the cell cortex. Chaperone that specifically binds and folds nascent G(s) G-alpha proteins (GNAS and GNAL) prior to G protein heterotrimer formation, promoting their association with the plasma membrane. Also acts as a guanine nucleotide exchange factor (GEF) for G(s) proteins by stimulating exchange of bound GDP for free GTP. Acts as an important component for odorant signal transduction by mediating GNAL (G(olf)-alpha) folding, thereby promoting-dependent cAMP accumulation in olfactory sensory neurons. The protein is Chaperone Ric-8B (Ric8b) of Rattus norvegicus (Rat).